Here is an 803-residue protein sequence, read N- to C-terminus: Leucine--tRNA ligase (803 aa).

The 'HIGH' region signature appears at 40–51; that stretch reads PYPSGAGLHVGH. Residues 575–579 carry the 'KMSKS' region motif; it reads KMSKS. Lys-578 lines the ATP pocket.

Belongs to the class-I aminoacyl-tRNA synthetase family.

It is found in the cytoplasm. The enzyme catalyses tRNA(Leu) + L-leucine + ATP = L-leucyl-tRNA(Leu) + AMP + diphosphate. This is Leucine--tRNA ligase from Listeria monocytogenes serovar 1/2a (strain ATCC BAA-679 / EGD-e).